A 407-amino-acid chain; its full sequence is Steroid 3-ketoacyl-CoA thiolase FadA6 (407 aa).

Residue Cys-110 is the Acyl-thioester intermediate of the active site. CoA-binding positions include Gln-178, 237–239 (RES), and Ser-262. Catalysis depends on proton acceptor residues His-363 and Cys-393. Position 395 (Gly-395) interacts with substrate.

Belongs to the thiolase-like superfamily. Thiolase family.

It carries out the reaction an acyl-CoA + acetyl-CoA = a 3-oxoacyl-CoA + CoA. It catalyses the reaction 6-methyl-3,7-dioxodecanedioyl-CoA + CoA = 4-methyl-5-oxo-octanedioyl-CoA + acetyl-CoA. Its pathway is steroid metabolism; cholesterol degradation. May be involved in the final steps of cholesterol and steroid degradation. Catalyzes the formation of 4-methyl-5-oxo-octanedioyl-CoA (MOODA-CoA) and acetyl-CoA from 6-methyl-3,7-dioxodecanedioyl-CoA (MeDODA-CoA) and coenzyme A. The chain is Steroid 3-ketoacyl-CoA thiolase FadA6 from Mycobacterium tuberculosis (strain ATCC 25618 / H37Rv).